The following is a 668-amino-acid chain: Fructose-1,6-bisphosphatase class 3 (668 aa).

This sequence belongs to the FBPase class 3 family. Mn(2+) serves as cofactor.

The catalysed reaction is beta-D-fructose 1,6-bisphosphate + H2O = beta-D-fructose 6-phosphate + phosphate. It participates in carbohydrate biosynthesis; gluconeogenesis. The chain is Fructose-1,6-bisphosphatase class 3 from Clostridium botulinum (strain ATCC 19397 / Type A).